The primary structure comprises 1342 residues: DNA-directed RNA polymerase subunit beta (1342 aa).

The protein belongs to the RNA polymerase beta chain family. As to quaternary structure, the RNAP catalytic core consists of 2 alpha, 1 beta, 1 beta' and 1 omega subunit. When a sigma factor is associated with the core the holoenzyme is formed, which can initiate transcription.

The catalysed reaction is RNA(n) + a ribonucleoside 5'-triphosphate = RNA(n+1) + diphosphate. DNA-dependent RNA polymerase catalyzes the transcription of DNA into RNA using the four ribonucleoside triphosphates as substrates. The chain is DNA-directed RNA polymerase subunit beta from Yersinia pestis bv. Antiqua (strain Angola).